A 189-amino-acid polypeptide reads, in one-letter code: Large ribosomal subunit protein eL20 (189 aa).

It belongs to the eukaryotic ribosomal protein eL20 family.

The protein localises to the cytoplasm. The chain is Large ribosomal subunit protein eL20 (RPL18A) from Tetrahymena thermophila.